The chain runs to 105 residues: Large ribosomal subunit protein bL21 (105 aa).

The protein belongs to the bacterial ribosomal protein bL21 family. In terms of assembly, part of the 50S ribosomal subunit. Contacts protein L20.

Functionally, this protein binds to 23S rRNA in the presence of protein L20. The protein is Large ribosomal subunit protein bL21 of Rhizobium etli (strain CIAT 652).